A 792-amino-acid chain; its full sequence is Protein SEY1 homolog 2 (792 aa).

The Cytoplasmic segment spans residues 1-638 (MEQIITGDGA…NIKAQANREQ (638 aa)). A GB1/RHD3-type G domain is found at 28–245 (GVDYHTVAII…LKDYLFAEKS (218 aa)). Residue 38 to 45 (GPQSSGKS) participates in GTP binding. A helical transmembrane segment spans residues 639-659 (IPGWAWLATFLCSSNYIMKLL). Residues 660-662 (ANP) lie on the Lumenal side of the membrane. A helical transmembrane segment spans residues 663–683 (IFFALAVIIGGIYSILRMLGL). Topologically, residues 684 to 792 (QDVAKKTLLD…LTRTQSLEFM (109 aa)) are cytoplasmic. The stretch at 691 to 718 (LLDKFNSLLKNLTKDENEQEKEGEENEE) forms a coiled coil. The disordered stretch occupies residues 703-792 (TKDENEQEKE…LTRTQSLEFM (90 aa)). The segment covering 707 to 723 (NEQEKEGEENEEPEEDQ) has biased composition (acidic residues). 2 stretches are compositionally biased toward polar residues: residues 739–751 (SVSQ…SIYK) and 764–774 (IPQTSPLGNND).

Belongs to the TRAFAC class dynamin-like GTPase superfamily. GB1/RHD3 GTPase family. RHD3 subfamily.

The protein resides in the endoplasmic reticulum membrane. Functionally, probable GTP-binding protein that may be involved in cell development. In Trichomonas vaginalis (strain ATCC PRA-98 / G3), this protein is Protein SEY1 homolog 2.